Consider the following 365-residue polypeptide: tRNA N6-adenosine threonylcarbamoyltransferase (365 aa).

2 residues coordinate Fe cation: H119 and H123. Residues 141-145 (LVSGG), D174, G187, and N288 contribute to the substrate site. A Fe cation-binding site is contributed by D316.

Belongs to the KAE1 / TsaD family. Fe(2+) serves as cofactor.

It localises to the cytoplasm. It carries out the reaction L-threonylcarbamoyladenylate + adenosine(37) in tRNA = N(6)-L-threonylcarbamoyladenosine(37) in tRNA + AMP + H(+). Its function is as follows. Required for the formation of a threonylcarbamoyl group on adenosine at position 37 (t(6)A37) in tRNAs that read codons beginning with adenine. Is involved in the transfer of the threonylcarbamoyl moiety of threonylcarbamoyl-AMP (TC-AMP) to the N6 group of A37, together with TsaE and TsaB. TsaD likely plays a direct catalytic role in this reaction. This is tRNA N6-adenosine threonylcarbamoyltransferase from Rhizobium johnstonii (strain DSM 114642 / LMG 32736 / 3841) (Rhizobium leguminosarum bv. viciae).